Reading from the N-terminus, the 731-residue chain is Fatty acid oxidation complex subunit alpha (731 aa).

Positions 15 to 204 (TEKTSAFSLT…RQGLVDEAVP (190 aa)) are enoyl-CoA hydratase. The 3-hydroxyacyl-CoA dehydrogenase stretch occupies residues 320–729 (KPIHRVGILG…FYPPADKDNS (410 aa)).

This sequence in the N-terminal section; belongs to the enoyl-CoA hydratase/isomerase family. In the central section; belongs to the 3-hydroxyacyl-CoA dehydrogenase family. As to quaternary structure, heterotetramer of two alpha chains (FadJ) and two beta chains (FadI).

It localises to the cytoplasm. The enzyme catalyses a (3S)-3-hydroxyacyl-CoA = a (2E)-enoyl-CoA + H2O. It carries out the reaction a 4-saturated-(3S)-3-hydroxyacyl-CoA = a (3E)-enoyl-CoA + H2O. It catalyses the reaction a (3S)-3-hydroxyacyl-CoA + NAD(+) = a 3-oxoacyl-CoA + NADH + H(+). The catalysed reaction is (3S)-3-hydroxybutanoyl-CoA = (3R)-3-hydroxybutanoyl-CoA. It participates in lipid metabolism; fatty acid beta-oxidation. Functionally, catalyzes the formation of a hydroxyacyl-CoA by addition of water on enoyl-CoA. Also exhibits 3-hydroxyacyl-CoA epimerase and 3-hydroxyacyl-CoA dehydrogenase activities. The protein is Fatty acid oxidation complex subunit alpha of Pectobacterium atrosepticum (strain SCRI 1043 / ATCC BAA-672) (Erwinia carotovora subsp. atroseptica).